A 128-amino-acid chain; its full sequence is Large ribosomal subunit protein bL12 (128 aa).

The protein belongs to the bacterial ribosomal protein bL12 family. In terms of assembly, homodimer. Part of the ribosomal stalk of the 50S ribosomal subunit. Forms a multimeric L10(L12)X complex, where L10 forms an elongated spine to which 2 to 4 L12 dimers bind in a sequential fashion. Binds GTP-bound translation factors.

Its function is as follows. Forms part of the ribosomal stalk which helps the ribosome interact with GTP-bound translation factors. Is thus essential for accurate translation. The polypeptide is Large ribosomal subunit protein bL12 (Kosmotoga olearia (strain ATCC BAA-1733 / DSM 21960 / TBF 19.5.1)).